Here is a 128-residue protein sequence, read N- to C-terminus: UPF0102 protein RPB_0420 (128 aa).

This sequence belongs to the UPF0102 family.

In Rhodopseudomonas palustris (strain HaA2), this protein is UPF0102 protein RPB_0420.